Reading from the N-terminus, the 78-residue chain is UPF0335 protein A1C_00850 (78 aa).

Belongs to the UPF0335 family.

This Rickettsia akari (strain Hartford) protein is UPF0335 protein A1C_00850.